The primary structure comprises 351 residues: Columbamine O-methyltransferase (351 aa).

The S-adenosyl-L-methionine site is built by Gly198, Asp221, Asp241, Met242, and Lys255. The active-site Proton acceptor is the His259.

This sequence belongs to the class I-like SAM-binding methyltransferase superfamily. Cation-independent O-methyltransferase family. COMT subfamily. As to quaternary structure, homodimer.

It catalyses the reaction columbamine + S-adenosyl-L-methionine = palmatine + S-adenosyl-L-homocysteine + H(+). It carries out the reaction (S)-tetrahydrocolumbamine + S-adenosyl-L-methionine = (S)-tetrahydropalmatine + S-adenosyl-L-homocysteine + H(+). It participates in alkaloid biosynthesis; palmatine biosynthesis; palmatine from columbamine: step 1/1. Its function is as follows. Catalyzes the conversion of tetrahydrocolumbamine to (S)-tetrahydropalmatine and of columbamine to palmatine, an isoquinoline alkaloid. In Coptis japonica (Japanese goldthread), this protein is Columbamine O-methyltransferase.